A 192-amino-acid polypeptide reads, in one-letter code: MVFGSKVIKSGGAEPDAFEGQIGQAILELEMNSDLKPQLRDLHITRAREIEFNNKKAIVIYVPVPKQKAFQKVQTRLVRELEKKFSGKHVVFIGERRILPKPQRGRRDPNKQKRPRSRTLTAVYDAILEDLVFPAEVVGKRIRVKLDGSQLIKVHLDKNQQTTIEHKVDTFTSVYKKLTGRDVTFEFPEPYL.

The protein belongs to the eukaryotic ribosomal protein eS7 family.

The chain is Small ribosomal subunit protein eS7 (RpS7) from Culex quinquefasciatus (Southern house mosquito).